The sequence spans 452 residues: Transcription factor ETV6 (452 aa).

N6-acetyllysine; alternate is present on lysine 11. Lysine 11 participates in a covalent cross-link: Glycyl lysine isopeptide (Lys-Gly) (interchain with G-Cter in SUMO2); alternate. Threonine 18 carries the post-translational modification Phosphothreonine. Serine 22 carries the phosphoserine modification. The region spanning 40–124 is the PNT domain; that stretch reads ALRMEEDSIR…ELLQHILKQR (85 aa). A disordered region spans residues 154-262; the sequence is EDNGVQRTSR…PRPSSPRQEG (109 aa). The segment covering 158 to 174 has biased composition (polar residues); sequence VQRTSRPSAENVHQNPP. Serine 213, serine 238, and serine 257 each carry phosphoserine. A Glycyl lysine isopeptide (Lys-Gly) (interchain with G-Cter in SUMO2) cross-link involves residue lysine 288. Lysine 302 is modified (N6-acetyllysine; alternate). A Glycyl lysine isopeptide (Lys-Gly) (interchain with G-Cter in SUMO2); alternate cross-link involves residue lysine 302. Serine 323 bears the Phosphoserine mark. Residues 339 to 420 constitute a DNA-binding region (ETS); sequence RLLWDYVYQL…PGQRLLFRFM (82 aa). Glycyl lysine isopeptide (Lys-Gly) (interchain with G-Cter in SUMO2) cross-links involve residues lysine 403 and lysine 421.

This sequence belongs to the ETS family. As to quaternary structure, can form homodimers or heterodimers with TEL2 or FLI1. Interacts with L3MBTL1 and HDAC9.

The protein resides in the nucleus. Functionally, transcriptional repressor; binds to the DNA sequence 5'-CCGGAAGT-3'. Plays a role in hematopoiesis and malignant transformation. In Bos taurus (Bovine), this protein is Transcription factor ETV6 (ETV6).